Here is a 412-residue protein sequence, read N- to C-terminus: Alpha-1-antiproteinase (412 aa).

The N-terminal stretch at 1–24 (MTPSISWGLLLLAGLFCLVPSFLA) is a signal peptide. A Phosphoserine modification is found at S33. 4 N-linked (GlcNAc...) asparagine glycosylation sites follow: N100, N133, N264, and N313. An RCL region spans residues 367-386 (AATVLQAVPMSMPPILNFNK). Residue S377 is modified to Phosphoserine.

Belongs to the serpin family. As to quaternary structure, interacts with CELA2A. Interacts with ERGIC3 and LMAN1/ERGIC53. Interacts with PRSS1/Trypsin. In terms of tissue distribution, expressed not only in liver but also in kidney tubule cells, where it is regulated by androgens during development.

It localises to the secreted. Inhibitor of serine proteases. Its primary target is elastase, but it also has a moderate affinity for plasmin and thrombin. The polypeptide is Alpha-1-antiproteinase (Serpina1) (Mus caroli (Ryukyu mouse)).